The chain runs to 487 residues: ATP synthase subunit beta (487 aa).

171 to 178 (GGAGVGKT) contacts ATP.

Belongs to the ATPase alpha/beta chains family. As to quaternary structure, F-type ATPases have 2 components, CF(1) - the catalytic core - and CF(0) - the membrane proton channel. CF(1) has five subunits: alpha(3), beta(3), gamma(1), delta(1), epsilon(1). CF(0) has three main subunits: a(1), b(2) and c(9-12). The alpha and beta chains form an alternating ring which encloses part of the gamma chain. CF(1) is attached to CF(0) by a central stalk formed by the gamma and epsilon chains, while a peripheral stalk is formed by the delta and b chains.

It localises to the cell membrane. It carries out the reaction ATP + H2O + 4 H(+)(in) = ADP + phosphate + 5 H(+)(out). In terms of biological role, produces ATP from ADP in the presence of a proton gradient across the membrane. The catalytic sites are hosted primarily by the beta subunits. In Leifsonia xyli subsp. xyli (strain CTCB07), this protein is ATP synthase subunit beta.